The sequence spans 364 residues: DNA replication and repair protein RecF (364 aa).

30 to 37 (GDNGAGKT) contributes to the ATP binding site.

This sequence belongs to the RecF family.

The protein localises to the cytoplasm. Its function is as follows. The RecF protein is involved in DNA metabolism; it is required for DNA replication and normal SOS inducibility. RecF binds preferentially to single-stranded, linear DNA. It also seems to bind ATP. The protein is DNA replication and repair protein RecF of Stenotrophomonas maltophilia (strain R551-3).